The chain runs to 286 residues: Phosphatidylserine decarboxylase proenzyme (286 aa).

Catalysis depends on charge relay system; for autoendoproteolytic cleavage activity residues Asp-90, His-147, and Ser-252. Catalysis depends on Ser-252, which acts as the Schiff-base intermediate with substrate; via pyruvic acid; for decarboxylase activity. The residue at position 252 (Ser-252) is a Pyruvic acid (Ser); by autocatalysis.

Belongs to the phosphatidylserine decarboxylase family. PSD-B subfamily. Prokaryotic type I sub-subfamily. Heterodimer of a large membrane-associated beta subunit and a small pyruvoyl-containing alpha subunit. It depends on pyruvate as a cofactor. Post-translationally, is synthesized initially as an inactive proenzyme. Formation of the active enzyme involves a self-maturation process in which the active site pyruvoyl group is generated from an internal serine residue via an autocatalytic post-translational modification. Two non-identical subunits are generated from the proenzyme in this reaction, and the pyruvate is formed at the N-terminus of the alpha chain, which is derived from the carboxyl end of the proenzyme. The autoendoproteolytic cleavage occurs by a canonical serine protease mechanism, in which the side chain hydroxyl group of the serine supplies its oxygen atom to form the C-terminus of the beta chain, while the remainder of the serine residue undergoes an oxidative deamination to produce ammonia and the pyruvoyl prosthetic group on the alpha chain. During this reaction, the Ser that is part of the protease active site of the proenzyme becomes the pyruvoyl prosthetic group, which constitutes an essential element of the active site of the mature decarboxylase.

It localises to the cell membrane. It carries out the reaction a 1,2-diacyl-sn-glycero-3-phospho-L-serine + H(+) = a 1,2-diacyl-sn-glycero-3-phosphoethanolamine + CO2. Its pathway is phospholipid metabolism; phosphatidylethanolamine biosynthesis; phosphatidylethanolamine from CDP-diacylglycerol: step 2/2. Its function is as follows. Catalyzes the formation of phosphatidylethanolamine (PtdEtn) from phosphatidylserine (PtdSer). The protein is Phosphatidylserine decarboxylase proenzyme of Azotobacter vinelandii (strain DJ / ATCC BAA-1303).